We begin with the raw amino-acid sequence, 518 residues long: AarF domain-containing kinase 1 (518 aa).

The Protein kinase domain occupies 149 to 468 (SFEREPLGTA…SKCCVQSSYA (320 aa)). ATP contacts are provided by residues 155–163 (LGTASLAQV) and lysine 177. Aspartate 309 acts as the Proton acceptor in catalysis.

This sequence belongs to the protein kinase superfamily. ADCK protein kinase family.

It is found in the mitochondrion. Essential for maintaining mitochondrial cristae formation and mitochondrial function by acting via YME1L to regulate the mitochondrial structural proteins Opa1 and Mitofilin. This function is likely to be kinase-independent. Functions in tracheal development and larval molting probably by acting in sterol modification and/or intracellular lipid trafficking. The action of this enzyme is not yet clear. It is not known if it has protein kinase activity and what type of substrate it would phosphorylate (Ser, Thr or Tyr). In Drosophila melanogaster (Fruit fly), this protein is AarF domain-containing kinase 1.